A 159-amino-acid polypeptide reads, in one-letter code: uncharacterized protein (159 aa).

This is an uncharacterized protein from Schizosaccharomyces pombe (strain 972 / ATCC 24843) (Fission yeast).